The sequence spans 41 residues: Large ribosomal subunit protein bL36 (41 aa).

This sequence belongs to the bacterial ribosomal protein bL36 family.

This Novosphingobium aromaticivorans (strain ATCC 700278 / DSM 12444 / CCUG 56034 / CIP 105152 / NBRC 16084 / F199) protein is Large ribosomal subunit protein bL36.